We begin with the raw amino-acid sequence, 709 residues long: MPSATSHSGSGSKSSGPPPPSGSSGSEAAAGAGAAAPASQHPATGTGAVQTEAMKQILGVIDKKLRNLEKKKGKLDDYQERMNKGERLNQDQLDAVSKYQEVTNNLEFAKELQRSFMALSQDIQKTIKKTARREQLMREEAEQKRLKTVLELQYVLDKLGDDEVRTDLKQGLNGVPILSEEELSLLDEFYKLVDPERDMSLRLNEQYEHASIHLWDLLEGKEKPVCGTTYKVLKEIVERVFQSNYFDSTHNHQNGLCEEEEAASAPAVEDQVPEAEPEPAEEYTEQSEVESTEYVNRQFMAETQFTSGEKEQVDEWTVETVEVVNSLQQQPQAASPSVPEPHSLTPVAQADPLVRRQRVQDLMAQMQGPYNFIQDSMLDFENQTLDPAIVSAQPMNPTQNMDMPQLVCPPVHSESRLAQPNQVPVQPEATQVPLVSSTSEGYTASQPLYQPSHATEQRPQKEPIDQIQATISLNTDQTTASSSLPAASQPQVFQAGTSKPLHSSGINVNAAPFQSMQTVFNMNAPVPPVNEPETLKQQNQYQASYNQSFSSQPHQVEQTELQQEQLQTVVGTYHGSPDQSHQVTGNHQQPPQQNTGFPRSNQPYYNSRGVSRGGSRGARGLMNGYRGPANGFRGGYDGYRPSFSNTPNSGYTQSQFSAPRDYSGYQRDGYQQNFKRGSGQSGPRGAPRGRGGPPRPNRGMPQMNTQQVN.

Low complexity-rich tracts occupy residues 1-15 (MPSA…SKSS) and 22-43 (GSSG…QHPA). Positions 1 to 50 (MPSATSHSGSGSKSSGPPPPSGSSGSEAAAGAGAAAPASQHPATGTGAVQ) are disordered. Pro-2 carries the N-acetylproline modification. Pro-2 bears the N-acetylalanine mark. Ser-10 is modified (phosphoserine). Positions 60–94 (VIDKKLRNLEKKKGKLDDYQERMNKGERLNQDQLD) form a coiled coil. At Ser-115 the chain carries Phosphoserine. Positions 125-153 (KTIKKTARREQLMREEAEQKRLKTVLELQ) form a coiled coil. Arg-165 is subject to Omega-N-methylarginine. The disordered stretch occupies residues 260-291 (EEAASAPAVEDQVPEAEPEPAEEYTEQSEVES). Residues 271–291 (QVPEAEPEPAEEYTEQSEVES) show a composition bias toward acidic residues. Residues Ser-335 and Ser-343 each carry the phosphoserine modification. The tract at residues 360 to 381 (QDLMAQMQGPYNFIQDSMLDFE) is G3BP1-binding. Disordered regions lie at residues 417–446 (LAQP…TASQ), 475–499 (TDQT…GTSK), and 524–709 (APVP…QQVN). Positions 433 to 446 (PLVSSTSEGYTASQ) are enriched in polar residues. Composition is skewed to low complexity over residues 477 to 491 (QTTA…SQPQ) and 537 to 570 (QQNQ…QTVV). Residues 577–605 (PDQSHQVTGNHQQPPQQNTGFPRSNQPYY) are compositionally biased toward polar residues. Tyr-625 carries the phosphotyrosine; by EPHA4 modification. Residues Arg-626 and Arg-633 each carry the omega-N-methylarginine modification. A phosphotyrosine; by EPHA4 mark is found at Tyr-636 and Tyr-639. Arg-640 bears the Omega-N-methylarginine mark. A compositionally biased stretch (polar residues) spans 642 to 657 (SFSNTPNSGYTQSQFS). Ser-644 and Ser-649 each carry an O-linked (GlcNAc) serine glycan. Residues Tyr-651, Tyr-662, Tyr-665, and Tyr-670 each carry the phosphotyrosine; by EPHA4 modification. Low complexity-rich tracts occupy residues 676-686 (RGSGQSGPRGA) and 697-709 (NRGM…QQVN). Arg-698 carries the asymmetric dimethylarginine; alternate modification. An Omega-N-methylarginine; alternate modification is found at Arg-698.

The protein belongs to the caprin family. May form homomultimers. Interacts with G3BP1; interaction is direct and promotes stress granule formation. Interacts with G3BP2; interaction is direct and promotes stress granule formation. Interacts with PQBP1. Interacts with DDX3X. Interacts (when phosphorylated by EPHA4) with FMR1; interaction with FMR1 promotes formation of a membraneless compartment. In terms of assembly, (Microbial infection) Interacts with Zika virus capsid protein C; this interaction is probably linked to the inhibition of stress granules formation by the virus. As to quaternary structure, (Microbial infection) Interacts with rotavirus A non-structural protein 5; this interaction probably plays a role in the sequestration of CAPRIN1 in viral factories. (Microbial infection) Interacts with Japanese encephalitis virus capsid protein C; this interaction is involved in the suppression of the integrated stress response by the virus. Tyrosine phosphorylation by EPHA4 promotes interaction with FMR1 and liquid-liquid phase separation (LLPS) for the formation of a membraneless compartment that concentrates mRNAs with associated regulatory factors. Post-translationally, O-glycosylated (O-GlcNAcylated), in a cell cycle-dependent manner. O-glycosylation by OGT inhibit ability to undergo liquid-liquid phase separation (LLPS). In terms of tissue distribution, ubiquitous.

It is found in the cytoplasm. The protein resides in the cytoplasmic ribonucleoprotein granule. The protein localises to the cytosol. It localises to the cell projection. Its subcellular location is the dendrite. It is found in the lamellipodium. Ability to mediate liquid-liquid phase separation is regulated by ATP: moderate concentrations of ATP enhance phase separation, whereas high concentrations of ATP lead to inhibition of phase separation. Its function is as follows. mRNA-binding protein that acts as a regulator of mRNAs transport, translation and/or stability, and which is involved in neurogenesis, synaptic plasticity in neurons and cell proliferation and migration in multiple cell types. Plays an essential role in cytoplasmic stress granule formation. Acts as an mRNA regulator by mediating formation of some phase-separated membraneless compartment: undergoes liquid-liquid phase separation upon binding to target mRNAs, leading to assemble mRNAs into cytoplasmic ribonucleoprotein granules that concentrate mRNAs with associated regulatory factors. Undergoes liquid-liquid phase separation following phosphorylation and interaction with FMR1, promoting formation of cytoplasmic ribonucleoprotein granules that concentrate mRNAs with factors that inhibit translation and mediate deadenylation of target mRNAs. In these cytoplasmic ribonucleoprotein granules, CAPRIN1 mediates recruitment of CNOT7 deadenylase, leading to mRNA deadenylation and degradation. Binds directly and selectively to MYC and CCND2 mRNAs. In neuronal cells, directly binds to several mRNAs associated with RNA granules, including BDNF, CAMK2A, CREB1, MAP2, NTRK2 mRNAs, as well as to GRIN1 and KPNB1 mRNAs, but not to rRNAs. The chain is Caprin-1 from Homo sapiens (Human).